The sequence spans 467 residues: Cruzipain (467 aa).

A signal peptide spans M1–A18. Residues C19–G122 constitute a propeptide, activation peptide. Intrachain disulfides connect C144-C185, C178-C223, and C277-C325. C147 is a catalytic residue. A glycan (N-linked (GlcNAc...) asparagine) is linked at N169. H284 is a catalytic residue. A glycan (N-linked (GlcNAc...) asparagine) is linked at N292. The active site involves N304. The tract at residues S333–G355 is disordered. Low complexity predominate over residues P345 to P354. N377 is a glycosylation site (N-linked (GlcNAc...) asparagine).

This sequence belongs to the peptidase C1 family.

It catalyses the reaction Broad endopeptidase specificity similar to that of cathepsin L.. Strongly inhibited by E-64 (L-trans-epoxysuccinylleucylamido(4-guanidino)butane), Leupeptin, and N-alpha-p-tosyl-L-lysine chloromethyl ketone. Its function is as follows. Hydrolyzes chromogenic peptides at the carboxyl Arg or Lys; requires at least one more amino acid, preferably Arg, Phe, Val or Leu, between the terminal Arg or Lys and the amino-blocking group. In terms of biological role, the cysteine protease may play an important role in the development and differentiation of the parasites at several stages of their life cycle. The sequence is that of Cruzipain from Trypanosoma cruzi.